A 132-amino-acid chain; its full sequence is MNLNQYYGTGRRKTASARVFIKSGISNGRVIINKRTLDQYFPRNNTQSIIIRPLKITNLLDKLDIYITVKGGGISGQAGAICHGMTRALLQYDEKLRGVLRSVGLVTRDSREVERKKVGLRKARRRPQFSKR.

This sequence belongs to the universal ribosomal protein uS9 family.

This chain is Small ribosomal subunit protein uS9, found in Blochmanniella pennsylvanica (strain BPEN).